The following is a 224-amino-acid chain: uncharacterized protein (224 aa).

The N-terminal stretch at 1-17 (MFTILLYFLVLFWVTNA) is a signal peptide.

This is an uncharacterized protein from Caenorhabditis elegans.